The chain runs to 762 residues: ABC-type oligopeptide transporter ABCB9 (762 aa).

8 helical membrane-spanning segments follow: residues 7–27 (VVVTLAFVSMDVGVTTAIYAF), 47–67 (VLDLWAACLYRSCLLLGATIG), 84–104 (LVITLVCLFVGIYAMAKLLLF), 116–136 (FWALFVWTYISLAASFLLWGL), 181–201 (VAFLVAASFFLIVAALGETFL), 221–241 (FTTAVVVVCLLAIGSSLAAGI), 315–335 (VFMFSLSWQLSLVTFMGFPII), and 412–432 (SGLTLLVVQVSILYYGGHLVI). The region spanning 184 to 467 (LVAASFFLIV…VGSVYSGLMQ (284 aa)) is the ABC transmembrane type-1 domain. The 237-residue stretch at 500–736 (VDFENVTFTY…GGLYAKLVQR (237 aa)) folds into the ABC transporter domain. 535–542 (GPSGSGKS) is a binding site for ATP.

Belongs to the ABC transporter superfamily. ABCB family. MHC peptide exporter (TC 3.A.1.209) subfamily. Homodimer. Interacts (via TMD0 region) with LAMP1; this interaction strongly stabilizes ABCB9 and protects ABCB9 against lysosomal degradation. Interacts (via TMD0 region) with LAMP2 (isoform LAMP-2B). Interacts (via TMD0) with YIF1B; this interaction allows (but is not essential) the ER-to-Golgi trafficking and strongly depends on a salt bridge within TMD0. Found in testis, particularly in the Sertoli cells of the seminiferous tubules. Also expressed in kidney, brain, heart, lung, spleen, thymus, intestine and testis. Higher expression detected in brain and testis than in thymus and intestine.

The protein resides in the lysosome membrane. The catalysed reaction is a [oligopeptide](in) + ATP + H2O = a [oligopeptide](out) + ADP + phosphate + H(+). ATP-dependent low-affinity peptide transporter which translocates a broad spectrum of peptides from the cytosol to the lysosomal lumen for degradation. Displays a broad peptide length specificity from 6-mer up to at least 59-mer peptides with an optimum of 23-mers. Binds and transports smaller and larger peptides with the same affinity. Favors positively charged, aromatic or hydrophobic residues in the N- and C-terminal positions whereas negatively charged residues as well as asparagine and methionine are not favored. The sequence is that of ABC-type oligopeptide transporter ABCB9 from Rattus norvegicus (Rat).